The sequence spans 392 residues: tRNA (guanine-N(7)-)-methyltransferase (392 aa).

Positions 123, 148, and 175 each coordinate S-adenosyl-L-methionine. 2 residues coordinate substrate: Lys-201 and Asp-231.

It belongs to the class I-like SAM-binding methyltransferase superfamily. TrmB family.

It catalyses the reaction guanosine(46) in tRNA + S-adenosyl-L-methionine = N(7)-methylguanosine(46) in tRNA + S-adenosyl-L-homocysteine. It functions in the pathway tRNA modification; N(7)-methylguanine-tRNA biosynthesis. Catalyzes the formation of N(7)-methylguanine at position 46 (m7G46) in tRNA. The polypeptide is tRNA (guanine-N(7)-)-methyltransferase (Campylobacter jejuni subsp. jejuni serotype O:6 (strain 81116 / NCTC 11828)).